A 127-amino-acid polypeptide reads, in one-letter code: uncharacterized protein (127 aa).

Disordered regions lie at residues 1-22 and 53-106; these read MLPAGCWNDTSRDGPGFRKMKG and LVGK…PGPK. The span at 76-95 shows a compositional bias: basic and acidic residues; it reads PNGEAHAEQARRKISVEEKQ.

The protein localises to the mitochondrion. This is an uncharacterized protein from Arabidopsis thaliana (Mouse-ear cress).